Consider the following 329-residue polypeptide: Thiamine thiazole synthase (329 aa).

Residues Cys-86, 107 to 108 (EA), Gly-115, and Val-180 each bind substrate. Cys-218 bears the 2,3-didehydroalanine (Cys) mark. Substrate contacts are provided by residues Asp-220, His-235, Met-287, and 297–299 (RMG).

This sequence belongs to the THI4 family. As to quaternary structure, homooctamer. Fe cation serves as cofactor. Post-translationally, during the catalytic reaction, a sulfide is transferred from Cys-218 to a reaction intermediate, generating a dehydroalanine residue.

It is found in the cytoplasm. It localises to the nucleus. The enzyme catalyses [ADP-thiazole synthase]-L-cysteine + glycine + NAD(+) = [ADP-thiazole synthase]-dehydroalanine + ADP-5-ethyl-4-methylthiazole-2-carboxylate + nicotinamide + 3 H2O + 2 H(+). Its function is as follows. Involved in biosynthesis of the thiamine precursor thiazole. Catalyzes the conversion of NAD and glycine to adenosine diphosphate 5-(2-hydroxyethyl)-4-methylthiazole-2-carboxylic acid (ADT), an adenylated thiazole intermediate. The reaction includes an iron-dependent sulfide transfer from a conserved cysteine residue of the protein to a thiazole intermediate. The enzyme can only undergo a single turnover, which suggests it is a suicide enzyme. May have additional roles in adaptation to various stress conditions and in DNA damage tolerance. This is Thiamine thiazole synthase from Phaeosphaeria nodorum (strain SN15 / ATCC MYA-4574 / FGSC 10173) (Glume blotch fungus).